The primary structure comprises 314 residues: Replication initiation protein (314 aa).

A compositionally biased stretch (polar residues) spans 1 to 10; that stretch reads MSKNNHANHS. The segment at 1-25 is disordered; it reads MSKNNHANHSNHLENHDLDNFSKTG. A compositionally biased stretch (basic and acidic residues) spans 11 to 20; the sequence is NHLENHDLDN.

This sequence belongs to the plasmid replication initiation factor family.

Its function is as follows. This protein is probably a specific topoisomerase involved in initiating replication. This protein is specifically required and may be rate-limiting for replication of the plasmid in vivo. This chain is Replication initiation protein (repN), found in Staphylococcus aureus.